Consider the following 141-residue polypeptide: Large ribosomal subunit protein mL42 (141 aa).

Residues 1–31 (MTAAVKWAVSHRTIWRHLFPIQNGAISSACH) constitute a mitochondrion transit peptide.

Belongs to the mitochondrion-specific ribosomal protein mL42 family. Component of the mitochondrial ribosome large subunit (39S) which comprises a 16S rRNA and about 50 distinct proteins. Component of the mitochondrial ribosome small subunit (28S) which comprises a 12S rRNA and about 30 distinct proteins.

The protein resides in the mitochondrion. The protein is Large ribosomal subunit protein mL42 (Mrpl42) of Rattus norvegicus (Rat).